We begin with the raw amino-acid sequence, 338 residues long: UDP-glucose 4-epimerase (338 aa).

NAD(+) contacts are provided by residues Tyr-11 to Ile-12, Asp-31 to Ser-36, Asp-58 to Ile-59, Phe-80 to Lys-84, Asn-99, Ser-124, Tyr-149, Lys-153, and Phe-178. Substrate is bound by residues Ser-124 and Tyr-149. Tyr-149 serves as the catalytic Proton acceptor. Substrate is bound by residues Asn-179, Asn-199–Leu-200, Ser-216–Phe-218, Arg-231, and Arg-292–Asp-295.

It belongs to the NAD(P)-dependent epimerase/dehydratase family. In terms of assembly, homodimer. The cofactor is NAD(+).

The catalysed reaction is UDP-alpha-D-glucose = UDP-alpha-D-galactose. The protein operates within carbohydrate metabolism; galactose metabolism. Involved in the metabolism of galactose. Catalyzes the conversion of UDP-galactose (UDP-Gal) to UDP-glucose (UDP-Glc) through a mechanism involving the transient reduction of NAD. By controlling the internal galactose concentration, it may be linked to the biosynthesis of lipopolysaccharide surface molecules, which are important for the pathogenesis of H.influenzae. In Haemophilus influenzae (strain ATCC 51907 / DSM 11121 / KW20 / Rd), this protein is UDP-glucose 4-epimerase (galE).